Reading from the N-terminus, the 123-residue chain is Small ribosomal subunit protein uS12 (123 aa).

The tract at residues 1-25 is disordered; that stretch reads MPTINQLVRKPRKSRSALNKAPALQ. Residue aspartate 90 is modified to 3-methylthioaspartic acid.

Belongs to the universal ribosomal protein uS12 family. Part of the 30S ribosomal subunit. Contacts proteins S8 and S17. May interact with IF1 in the 30S initiation complex.

In terms of biological role, with S4 and S5 plays an important role in translational accuracy. Interacts with and stabilizes bases of the 16S rRNA that are involved in tRNA selection in the A site and with the mRNA backbone. Located at the interface of the 30S and 50S subunits, it traverses the body of the 30S subunit contacting proteins on the other side and probably holding the rRNA structure together. The combined cluster of proteins S8, S12 and S17 appears to hold together the shoulder and platform of the 30S subunit. The chain is Small ribosomal subunit protein uS12 from Ehrlichia canis (strain Jake).